Here is a 204-residue protein sequence, read N- to C-terminus: Spermatogenesis-associated protein 46 (204 aa).

A disordered region spans residues 101–120 (SSSSQENTYPREANRKSKHG).

As to expression, testis-specific.

Its subcellular location is the nucleus membrane. Its function is as follows. Plays a role in spermiogenesis and fertilization. This Mus musculus (Mouse) protein is Spermatogenesis-associated protein 46 (Spata46).